Here is a 142-residue protein sequence, read N- to C-terminus: Large ribosomal subunit protein uL13 (142 aa).

Belongs to the universal ribosomal protein uL13 family. As to quaternary structure, part of the 50S ribosomal subunit.

In terms of biological role, this protein is one of the early assembly proteins of the 50S ribosomal subunit, although it is not seen to bind rRNA by itself. It is important during the early stages of 50S assembly. This is Large ribosomal subunit protein uL13 from Pseudomonas syringae pv. syringae (strain B728a).